A 305-amino-acid polypeptide reads, in one-letter code: Probable G-protein coupled receptor 141 (305 aa).

Residues 1-22 (MPGHNTSRNSSCDPIVTPHLIS) lie on the Extracellular side of the membrane. Asn5 and Asn9 each carry an N-linked (GlcNAc...) asparagine glycan. Residues 23–43 (LYFIVLIGGLVGVISILFLLV) traverse the membrane as a helical segment. Residues 44–50 (KMNTRSV) are Cytoplasmic-facing. A helical membrane pass occupies residues 51-71 (TTMAVINLVVVHSVFLLTVPF). Over 72–89 (RLTYLIKKTWMFGLPFCK) the chain is Extracellular. A helical membrane pass occupies residues 90–110 (FVSAMLHIHMYLTFLFYVVIL). At 111–131 (VTRYLIFFKCKDKVEFYRKLH) the chain is on the cytoplasmic side. A helical transmembrane segment spans residues 132 to 152 (AVAASAGMWTLVIVIVVPLVV). Topologically, residues 153 to 183 (SRYGIHEEYNEEHCFKFHKELAYTYVKIINY) are extracellular. The chain crosses the membrane as a helical span at residues 184-204 (MIVIFVIAVAVILLVFQVFII). Residues 205–227 (MLMVQKLRHSLLSHQEFWAQLKN) lie on the Cytoplasmic side of the membrane. The chain crosses the membrane as a helical span at residues 228-248 (LFFIGVILVCFLPYQFFRIYY). Over 249–267 (LNVVTHSNACNSKVAFYNE) the chain is Extracellular. Residues 268–288 (IFLSVTAISCYDLLLFVFGGS) form a helical membrane-spanning segment. Residues 289-305 (HWFKQKIIGLWNCVLCR) lie on the Cytoplasmic side of the membrane.

Belongs to the G-protein coupled receptor 1 family.

It localises to the cell membrane. In terms of biological role, orphan receptor. In Homo sapiens (Human), this protein is Probable G-protein coupled receptor 141 (GPR141).